A 173-amino-acid chain; its full sequence is Large ribosomal subunit protein uL10 (173 aa).

This sequence belongs to the universal ribosomal protein uL10 family. As to quaternary structure, part of the ribosomal stalk of the 50S ribosomal subunit. The N-terminus interacts with L11 and the large rRNA to form the base of the stalk. The C-terminus forms an elongated spine to which L12 dimers bind in a sequential fashion forming a multimeric L10(L12)X complex.

In terms of biological role, forms part of the ribosomal stalk, playing a central role in the interaction of the ribosome with GTP-bound translation factors. The polypeptide is Large ribosomal subunit protein uL10 (Corynebacterium aurimucosum (strain ATCC 700975 / DSM 44827 / CIP 107346 / CN-1) (Corynebacterium nigricans)).